A 123-amino-acid chain; its full sequence is MATINQLVRQPRKRIVEKSDVPALQNCPQRRGVCTRVYTTTPKKPNSALRKVCRVRLTNGFEVSSYIGGEGHNLQEHSVVLIRGGRVKDLPGVRYHTVRGSLDTSGVKGRNQGRSKYGTKRPK.

Asp89 bears the 3-methylthioaspartic acid mark. The segment at 100-123 (GSLDTSGVKGRNQGRSKYGTKRPK) is disordered. The span at 111–123 (NQGRSKYGTKRPK) shows a compositional bias: basic residues.

Belongs to the universal ribosomal protein uS12 family. As to quaternary structure, part of the 30S ribosomal subunit. Contacts proteins S8 and S17. May interact with IF1 in the 30S initiation complex.

Functionally, with S4 and S5 plays an important role in translational accuracy. In terms of biological role, interacts with and stabilizes bases of the 16S rRNA that are involved in tRNA selection in the A site and with the mRNA backbone. Located at the interface of the 30S and 50S subunits, it traverses the body of the 30S subunit contacting proteins on the other side and probably holding the rRNA structure together. The combined cluster of proteins S8, S12 and S17 appears to hold together the shoulder and platform of the 30S subunit. This chain is Small ribosomal subunit protein uS12, found in Pseudomonas fluorescens (strain ATCC BAA-477 / NRRL B-23932 / Pf-5).